Reading from the N-terminus, the 331-residue chain is Anthranilate phosphoribosyltransferase (331 aa).

5-phospho-alpha-D-ribose 1-diphosphate-binding positions include Gly79, 82–83 (GD), Ser87, 89–92 (NIST), 107–115 (KHCNSSISG), and Ser119. Gly79 serves as a coordination point for anthranilate. Ser91 serves as a coordination point for Mg(2+). Position 110 (Asn110) interacts with anthranilate. Arg165 provides a ligand contact to anthranilate. Mg(2+) contacts are provided by Asp223 and Glu224.

It belongs to the anthranilate phosphoribosyltransferase family. Homodimer. Mg(2+) serves as cofactor.

It catalyses the reaction N-(5-phospho-beta-D-ribosyl)anthranilate + diphosphate = 5-phospho-alpha-D-ribose 1-diphosphate + anthranilate. It functions in the pathway amino-acid biosynthesis; L-tryptophan biosynthesis; L-tryptophan from chorismate: step 2/5. In terms of biological role, catalyzes the transfer of the phosphoribosyl group of 5-phosphorylribose-1-pyrophosphate (PRPP) to anthranilate to yield N-(5'-phosphoribosyl)-anthranilate (PRA). The chain is Anthranilate phosphoribosyltransferase from Buchnera aphidicola subsp. Melaphis rhois.